We begin with the raw amino-acid sequence, 334 residues long: Uracil-DNA glycosylase (334 aa).

Residues 1–17 (MKRACSRSPSPRRRPSS) are compositionally biased toward basic residues. Disordered stretches follow at residues 1 to 63 (MKRA…CRSS) and 79 to 104 (VTFS…AATS). A compositionally biased stretch (polar residues) spans 40–50 (GASNDASTETR). Catalysis depends on Asp178, which acts as the Proton acceptor.

Belongs to the uracil-DNA glycosylase (UDG) superfamily. UNG family.

Its subcellular location is the host nucleus. The catalysed reaction is Hydrolyzes single-stranded DNA or mismatched double-stranded DNA and polynucleotides, releasing free uracil.. Excises uracil residues from the DNA which can arise as a result of misincorporation of dUMP residues by DNA polymerase or deamination of cytosines. Therefore may reduce deleterious uracil incorporation into the viral genome, particularly in terminally differentiated cells which lack DNA repair enzymes. The sequence is that of Uracil-DNA glycosylase from Human herpesvirus 1 (strain 17) (HHV-1).